A 456-amino-acid polypeptide reads, in one-letter code: tRNA modification GTPase MnmE (456 aa).

Positions 24, 81, and 120 each coordinate (6S)-5-formyl-5,6,7,8-tetrahydrofolate. A TrmE-type G domain is found at 216 to 379; sequence GMTVVIAGRP…LREHLKACMG (164 aa). Asn226 contributes to the K(+) binding site. GTP is bound by residues 226–231, 245–251, 270–273, 335–338, and 359–361; these read NAGKSS, TEIAGTT, DTAG, NKAD, and SAR. Ser230 serves as a coordination point for Mg(2+). Thr245, Ile247, and Thr250 together coordinate K(+). Residue Thr251 coordinates Mg(2+). (6S)-5-formyl-5,6,7,8-tetrahydrofolate is bound at residue Lys456.

Belongs to the TRAFAC class TrmE-Era-EngA-EngB-Septin-like GTPase superfamily. TrmE GTPase family. In terms of assembly, homodimer. Heterotetramer of two MnmE and two MnmG subunits. Requires K(+) as cofactor.

The protein localises to the cytoplasm. Its function is as follows. Exhibits a very high intrinsic GTPase hydrolysis rate. Involved in the addition of a carboxymethylaminomethyl (cmnm) group at the wobble position (U34) of certain tRNAs, forming tRNA-cmnm(5)s(2)U34. The sequence is that of tRNA modification GTPase MnmE from Pseudomonas syringae pv. syringae (strain B728a).